An 826-amino-acid chain; its full sequence is Putative pentatricopeptide repeat-containing protein At1g13630 (826 aa).

PPR repeat units lie at residues 228 to 262, 263 to 297, 298 to 332, 333 to 367, 368 to 402, 404 to 438, 439 to 473, 474 to 508, 509 to 543, 544 to 578, 579 to 613, 614 to 648, 661 to 695, 696 to 730, 731 to 765, and 766 to 800; these read NEHT…DIGP, SVVS…GLVP, SVYS…GVEP, DSVT…GLSP, DVIT…GFEL, SIIP…GLSP, DLVA…RILP, NSRT…GETL, DIVL…GITP, SVAT…GLAP, SVVS…GIPP, TNVT…KCKQ, DQIT…NLDA, SSAT…NVSL, SKFA…GFNV, and SIRD…GISP.

It belongs to the PPR family. P subfamily.

The protein is Putative pentatricopeptide repeat-containing protein At1g13630 of Arabidopsis thaliana (Mouse-ear cress).